The chain runs to 102 residues: Phosphoribosyl-ATP pyrophosphatase (102 aa).

It belongs to the PRA-PH family.

The protein localises to the cytoplasm. It carries out the reaction 1-(5-phospho-beta-D-ribosyl)-ATP + H2O = 1-(5-phospho-beta-D-ribosyl)-5'-AMP + diphosphate + H(+). The protein operates within amino-acid biosynthesis; L-histidine biosynthesis; L-histidine from 5-phospho-alpha-D-ribose 1-diphosphate: step 2/9. This is Phosphoribosyl-ATP pyrophosphatase from Dinoroseobacter shibae (strain DSM 16493 / NCIMB 14021 / DFL 12).